Here is a 392-residue protein sequence, read N- to C-terminus: Enoyl-[acyl-carrier-protein] reductase [NADH] (392 aa).

Residues 48–53, 74–75, 111–112, and 139–140 contribute to the NAD(+) site; these read GCSTGY, FE, DA, and LA. A substrate-binding site is contributed by Tyr-225. Tyr-235 (proton donor) is an active-site residue. Residues Lys-244 and 273 to 275 each bind NAD(+); that span reads LVT.

The protein belongs to the TER reductase family. Monomer.

The enzyme catalyses a 2,3-saturated acyl-[ACP] + NAD(+) = a (2E)-enoyl-[ACP] + NADH + H(+). Its pathway is lipid metabolism; fatty acid biosynthesis. Its function is as follows. Involved in the final reduction of the elongation cycle of fatty acid synthesis (FAS II). Catalyzes the reduction of a carbon-carbon double bond in an enoyl moiety that is covalently linked to an acyl carrier protein (ACP). The protein is Enoyl-[acyl-carrier-protein] reductase [NADH] of Idiomarina loihiensis (strain ATCC BAA-735 / DSM 15497 / L2-TR).